The chain runs to 37 residues: Large ribosomal subunit protein bL36c (37 aa).

This sequence belongs to the bacterial ribosomal protein bL36 family.

The protein resides in the plastid. The protein localises to the chloroplast. The protein is Large ribosomal subunit protein bL36c of Angiopteris evecta (Mule's foot fern).